We begin with the raw amino-acid sequence, 227 residues long: Cytochrome c oxidase subunit 2 (227 aa).

Topologically, residues 1–14 (MAYPFQLGFQDATS) are mitochondrial intermembrane. A helical membrane pass occupies residues 15 to 45 (PIMEELLHFHDHTLMIVFLISSLVLYIITLM). The Mitochondrial matrix segment spans residues 46 to 59 (LTTKLTHTSTMDAQ). A helical transmembrane segment spans residues 60-87 (EVETVWTILPAIILILIALPSLRILYMM). The Mitochondrial intermembrane segment spans residues 88-227 (DEVNNPSLTV…FFEKWSASML (140 aa)). Residues H161, C196, E198, C200, H204, and M207 each contribute to the Cu cation site. E198 contacts Mg(2+).

It belongs to the cytochrome c oxidase subunit 2 family. Component of the cytochrome c oxidase (complex IV, CIV), a multisubunit enzyme composed of 14 subunits. The complex is composed of a catalytic core of 3 subunits MT-CO1, MT-CO2 and MT-CO3, encoded in the mitochondrial DNA, and 11 supernumerary subunits COX4I, COX5A, COX5B, COX6A, COX6B, COX6C, COX7A, COX7B, COX7C, COX8 and NDUFA4, which are encoded in the nuclear genome. The complex exists as a monomer or a dimer and forms supercomplexes (SCs) in the inner mitochondrial membrane with NADH-ubiquinone oxidoreductase (complex I, CI) and ubiquinol-cytochrome c oxidoreductase (cytochrome b-c1 complex, complex III, CIII), resulting in different assemblies (supercomplex SCI(1)III(2)IV(1) and megacomplex MCI(2)III(2)IV(2)). Found in a complex with TMEM177, COA6, COX18, COX20, SCO1 and SCO2. Interacts with TMEM177 in a COX20-dependent manner. Interacts with COX20. Interacts with COX16. Requires Cu cation as cofactor.

The protein localises to the mitochondrion inner membrane. The catalysed reaction is 4 Fe(II)-[cytochrome c] + O2 + 8 H(+)(in) = 4 Fe(III)-[cytochrome c] + 2 H2O + 4 H(+)(out). In terms of biological role, component of the cytochrome c oxidase, the last enzyme in the mitochondrial electron transport chain which drives oxidative phosphorylation. The respiratory chain contains 3 multisubunit complexes succinate dehydrogenase (complex II, CII), ubiquinol-cytochrome c oxidoreductase (cytochrome b-c1 complex, complex III, CIII) and cytochrome c oxidase (complex IV, CIV), that cooperate to transfer electrons derived from NADH and succinate to molecular oxygen, creating an electrochemical gradient over the inner membrane that drives transmembrane transport and the ATP synthase. Cytochrome c oxidase is the component of the respiratory chain that catalyzes the reduction of oxygen to water. Electrons originating from reduced cytochrome c in the intermembrane space (IMS) are transferred via the dinuclear copper A center (CU(A)) of subunit 2 and heme A of subunit 1 to the active site in subunit 1, a binuclear center (BNC) formed by heme A3 and copper B (CU(B)). The BNC reduces molecular oxygen to 2 water molecules using 4 electrons from cytochrome c in the IMS and 4 protons from the mitochondrial matrix. The protein is Cytochrome c oxidase subunit 2 (MT-CO2) of Balaenoptera musculus (Blue whale).